The primary structure comprises 238 residues: Leucine-rich repeat-containing protein 57 (238 aa).

LRR repeat units lie at residues 39-60, 62-84, 85-106, 108-129, 131-152, 153-175, 176-196, and 201-221; these read NLRTIDLSSNKIEVVPPMMGKF, LLKSLSLNNNRISRLPDELCKLK, KLETLHLNGNQISQLPADFVQL, ALKTLNLSGNRLKTLPAQLFKL, NLDVVDLSKNRIQAIPDEVSGL, QAIELNLNQNQISQISVNISHCP, RLKVLRLEENCLELSMLPPSI, and QISLLAVEGNLFEIKKLRDLE.

This is Leucine-rich repeat-containing protein 57 (lrrc57) from Xenopus laevis (African clawed frog).